Consider the following 338-residue polypeptide: MKHKGAILIVIGVVALAAMILIIGPGEIEDALRKADPVYVLMAVVLEFIILALFTLRWSITTRAVSIDVGKRHLFPMLLVGMAINNLTPSARGGGEPVRAYMLGKYSRASMESAFATVIADRGLDTFPFIFLAVLTIIGIVLYFDLSRWILAALIASVVIIVVAFFLALYVSVDRDAGERITGWILGVVKRFYRKNHERLERRVRSALHEFQSTMRMMLKEKNVLVYGIPISFLIWILEIIRVYLIFTAFGTDISLLVIAEVFILATLIGMIPLLPGGLGAVDGIMIVFYSYAGVSPSVSAAATVVERLISFWMISAMGVAAIPYFGSSVSEKLMDKL.

8 helical membrane passes run 6-26 (AILIVIGVVALAAMILIIGPG), 36-56 (DPVYVLMAVVLEFIILALFTL), 124-144 (LDTFPFIFLAVLTIIGIVLYF), 149-169 (WILAALIASVVIIVVAFFLAL), 231-251 (ISFLIWILEIIRVYLIFTAFG), 254-274 (ISLLVIAEVFILATLIGMIPL), 275-295 (LPGGLGAVDGIMIVFYSYAGV), and 310-330 (ISFWMISAMGVAAIPYFGSSV).

Belongs to the UPF0104 family.

The protein localises to the cell membrane. The chain is UPF0104 membrane protein MTH_1261 from Methanothermobacter thermautotrophicus (strain ATCC 29096 / DSM 1053 / JCM 10044 / NBRC 100330 / Delta H) (Methanobacterium thermoautotrophicum).